We begin with the raw amino-acid sequence, 977 residues long: Ephrin type-A receptor 2 (977 aa).

A signal peptide spans 1 to 25 (MELRAVGFCLALLWGCALAAAAAQG). Positions 1–205 (MELRAVGFCL…YYKKCPEMLQ (205 aa)) are mediates interaction with CLDN4. Topologically, residues 26-538 (KEVVLLDFAA…STEGSANMAV (513 aa)) are extracellular. Residues 27–205 (EVVLLDFAAM…YYKKCPEMLQ (179 aa)) form the Eph LBD domain. 2 disulfides stabilise this stretch: Cys-69-Cys-187 and Cys-104-Cys-114. One can recognise a Fibronectin type-III 1 domain in the interval 329–433 (PPSAPNYLTA…TSRSFRTASV (105 aa)). Residues Asn-408 and Asn-436 are each glycosylated (N-linked (GlcNAc...) asparagine). The 92-residue stretch at 439–530 (EPPKVRLEDR…KVHEFQTLST (92 aa)) folds into the Fibronectin type-III 2 domain. A helical transmembrane segment spans residues 539 to 559 (IGGVAVGVVLLLVLAGVGLFI). Topologically, residues 560–977 (HRRRRNLRAR…DQVNTVGIPI (418 aa)) are cytoplasmic. Residues Ser-571 and Ser-580 each carry the phosphoserine modification. Residues Tyr-589 and Tyr-595 each carry the phosphotyrosine; by autocatalysis modification. The tract at residues 607 to 907 (TEIHPSCVAR…STSGSEGVPF (301 aa)) is mediates interaction with ARHGEF16. Residues 614 to 876 (VARQKVIGAG…DIVSILDKLI (263 aa)) enclose the Protein kinase domain. Residue 620-628 (IGAGEFGEV) participates in ATP binding. Tyr-629 is modified (phosphotyrosine). ATP is bound at residue Lys-647. Thr-648 carries the post-translational modification Phosphothreonine. A Phosphotyrosine; by autocatalysis modification is found at Tyr-736. Residue Asp-740 is the Proton acceptor of the active site. Phosphotyrosine; by autocatalysis is present on Tyr-773. 4 positions are modified to phosphoserine: Ser-870, Ser-893, Ser-898, and Ser-902. Residues 887–977 (DFDPRVSIRL…DQVNTVGIPI (91 aa)) form a negatively regulates interaction with ARHGEF16 region. Residues 905-969 (VPFRTVSEWL…AYSLLGLKDQ (65 aa)) enclose the SAM domain. At Tyr-922 the chain carries Phosphotyrosine; by autocatalysis. Tyr-931 carries the post-translational modification Phosphotyrosine. A PDZ-binding motif is present at residues 975–977 (IPI).

The protein belongs to the protein kinase superfamily. Tyr protein kinase family. Ephrin receptor subfamily. In terms of assembly, homodimer. Interacts with INPPL1; regulates activated EPHA2 endocytosis and degradation. Interacts (inactivated form) with PTK2/FAK1 and interacts (EFNA1 ligand-activated form) with PTPN11; regulates integrin-mediated adhesion. Interacts with ARHGEF16, DOCK4 and ELMO2; mediates ligand-independent activation of RAC1 which stimulates cell migration. Interacts with CLDN4; phosphorylates CLDN4 and may regulate tight junctions. Interacts with ACP1. Interacts with CEMIP. Interacts with NCK1; may regulate EPHA2 activity in cell migration and adhesion. Interacts with SLA. Interacts (phosphorylated form) with VAV2, VAV3 and PI3-kinase p85 subunit (PIK3R1, PIK3R2 or PIK3R3); critical for the EFNA1-induced activation of RAC1 which stimulates cell migration. Interacts with ANKS1A. Interacts with TIMD4. In terms of processing, autophosphorylates. Phosphorylated at Ser-898 by PKB; serum-induced phosphorylation which targets EPHA2 to the cell leading edge and stimulates cell migration. Phosphorylation by PKB is inhibited by EFNA1-activated EPHA2 which regulates PKB activity via a reciprocal regulatory loop. Phosphorylated on tyrosine upon binding and activation by EFNA1. Phosphorylated residues Tyr-589 and Tyr-595 are required for binding VAV2 and VAV3 while phosphorylated residues Tyr-736 and Tyr-931 are required for binding PI3-kinase p85 subunit (PIK3R1, PIK3R2 or PIK3R3). These phosphorylated residues are critical for recruitment of VAV2 and VAV3 and PI3-kinase p85 subunit which transduce downstream signaling to activate RAC1 GTPase and cell migration. Dephosphorylation of Tyr-931 by PTPRF prevents the interaction of EPHA2 with NCK1. Phosphorylated at Ser-898 in response to TNF by RPS6KA1 and RPS6KA3; RPS6KA-EPHA2 signaling pathway controls cell migration. Phosphorylated at Ser-898 by PKA; blocks cell retraction induced by EPHA2 kinase activity. Dephosphorylated by ACP1. Post-translationally, ubiquitinated by CHIP/STUB1. Ubiquitination is regulated by the HSP90 chaperone and regulates the receptor stability and activity through proteasomal degradation. ANKS1A prevents ubiquitination and degradation. In terms of tissue distribution, expressed in the lung, intestine and liver. Expressed in myogenic progenitor cells.

The protein resides in the cell membrane. Its subcellular location is the cell projection. The protein localises to the ruffle membrane. It is found in the lamellipodium membrane. It localises to the cell junction. The protein resides in the focal adhesion. The enzyme catalyses L-tyrosyl-[protein] + ATP = O-phospho-L-tyrosyl-[protein] + ADP + H(+). Its function is as follows. Receptor tyrosine kinase which binds promiscuously membrane-bound ephrin-A family ligands residing on adjacent cells, leading to contact-dependent bidirectional signaling into neighboring cells. The signaling pathway downstream of the receptor is referred to as forward signaling while the signaling pathway downstream of the ephrin ligand is referred to as reverse signaling. Activated by the ligand ephrin-A1/EFNA1 regulates migration, integrin-mediated adhesion, proliferation and differentiation of cells. Regulates cell adhesion and differentiation through DSG1/desmoglein-1 and inhibition of the ERK1/ERK2 signaling pathway. May also participate in UV radiation-induced apoptosis and have a ligand-independent stimulatory effect on chemotactic cell migration. During development, may function in distinctive aspects of pattern formation and subsequently in development of several fetal tissues. Involved for instance in angiogenesis, in early hindbrain development and epithelial proliferation and branching morphogenesis during mammary gland development. Engaged by the ligand ephrin-A5/EFNA5 may regulate lens fiber cells shape and interactions and be important for lens transparency development and maintenance. With ephrin-A2/EFNA2 may play a role in bone remodeling through regulation of osteoclastogenesis and osteoblastogenesis. The sequence is that of Ephrin type-A receptor 2 (Epha2) from Mus musculus (Mouse).